Consider the following 530-residue polypeptide: MELTLWTYEGPPHVGAMRIAASMHGVHYVLHAPQGDTYADLLFTMIERRGQRPPVTYTTFQARDLGGDTAELVKRHVQEAADRFQPDALLVGESCTAELIQDQPGALAQGMGLPMPVVTLELPAYSKKENWGASETFYQLMRGLLKQSVPPQPSHDVQAWKHEGRRPRVNLLGPSLLGFRCRDDVLEVQRLLSLHGIDVGVVAPLGAGVEDILRLPQADLNVCLYPEVAESSCSWLERNFGIPFSKTVPIGMGATHDFLVEVHALLGMTPPEAAEGYQRSRMPWYSESVDSTYLTGKRVFIFGDGTHAIAAARICSEELGFTVVGLGSYSREMARPVRAAAKKLGLEALICDDYLAVEAAMAEAAPELVLGTQMERHSAKRLGIPCAVISTPMHVQDVPARLSPQMGWEGANVIFDAWVHPLMMGLEEHLIGMFRHDFEFVDGHQSHLGHAGGAGAGNNHGTESVRASGCQDEAPSGQLIWTADGEAELKKIPFFVRGKVRRNAESYARTVGCKEISSETLYDAKAHYKA.

D36 serves as a coordination point for [4Fe-4S] cluster. The active-site Proton donor is the D290. 425 to 426 (GL) is a substrate binding site.

It belongs to the ChlB/BchB/BchZ family. In terms of assembly, protochlorophyllide reductase is composed of three subunits; ChlL, ChlN and ChlB. Forms a heterotetramer of two ChlB and two ChlN subunits. [4Fe-4S] cluster serves as cofactor.

It carries out the reaction chlorophyllide a + oxidized 2[4Fe-4S]-[ferredoxin] + 2 ADP + 2 phosphate = protochlorophyllide a + reduced 2[4Fe-4S]-[ferredoxin] + 2 ATP + 2 H2O. It participates in porphyrin-containing compound metabolism; chlorophyll biosynthesis (light-independent). In terms of biological role, component of the dark-operative protochlorophyllide reductase (DPOR) that uses Mg-ATP and reduced ferredoxin to reduce ring D of protochlorophyllide (Pchlide) to form chlorophyllide a (Chlide). This reaction is light-independent. The NB-protein (ChlN-ChlB) is the catalytic component of the complex. This Synechococcus sp. (strain WH7803) protein is Light-independent protochlorophyllide reductase subunit B.